The chain runs to 275 residues: Formamidopyrimidine-DNA glycosylase (275 aa).

The active-site Schiff-base intermediate with DNA is proline 2. The active-site Proton donor is glutamate 3. Lysine 58 serves as the catalytic Proton donor; for beta-elimination activity. DNA is bound by residues histidine 93, arginine 111, and arginine 156. The FPG-type zinc-finger motif lies at 241–275 (FVYDRAGLPCRVCGTPIRQIVQGQRSTYFCPTCQR). The active-site Proton donor; for delta-elimination activity is the arginine 265.

Belongs to the FPG family. Monomer. It depends on Zn(2+) as a cofactor.

It catalyses the reaction Hydrolysis of DNA containing ring-opened 7-methylguanine residues, releasing 2,6-diamino-4-hydroxy-5-(N-methyl)formamidopyrimidine.. The catalysed reaction is 2'-deoxyribonucleotide-(2'-deoxyribose 5'-phosphate)-2'-deoxyribonucleotide-DNA = a 3'-end 2'-deoxyribonucleotide-(2,3-dehydro-2,3-deoxyribose 5'-phosphate)-DNA + a 5'-end 5'-phospho-2'-deoxyribonucleoside-DNA + H(+). Involved in base excision repair of DNA damaged by oxidation or by mutagenic agents. Acts as a DNA glycosylase that recognizes and removes damaged bases. Has a preference for oxidized purines, such as 7,8-dihydro-8-oxoguanine (8-oxoG). Has AP (apurinic/apyrimidinic) lyase activity and introduces nicks in the DNA strand. Cleaves the DNA backbone by beta-delta elimination to generate a single-strand break at the site of the removed base with both 3'- and 5'-phosphates. The chain is Formamidopyrimidine-DNA glycosylase from Burkholderia ambifaria (strain MC40-6).